The sequence spans 180 residues: Large ribosomal subunit protein uL6 (180 aa).

It belongs to the universal ribosomal protein uL6 family. As to quaternary structure, part of the 50S ribosomal subunit.

Its function is as follows. This protein binds to the 23S rRNA, and is important in its secondary structure. It is located near the subunit interface in the base of the L7/L12 stalk, and near the tRNA binding site of the peptidyltransferase center. The polypeptide is Large ribosomal subunit protein uL6 (Borrelia garinii subsp. bavariensis (strain ATCC BAA-2496 / DSM 23469 / PBi) (Borreliella bavariensis)).